The chain runs to 658 residues: Interferon-induced GTP-binding protein Mx1 (658 aa).

Met1 carries the N-acetylmethionine modification. Residues 1 to 20 (MVNSKGKITDSDPGSSHLLL) are disordered. The region spanning 65–338 (DLALPAIAVI…LITHICKTLP (274 aa)) is the Dynamin-type G domain. The G1 motif stretch occupies residues 75–82 (GDQSSGKS). A GTP-binding site is contributed by 75 to 82 (GDQSSGKS). The interval 100 to 102 (VTR) is G2 motif. The tract at residues 176 to 179 (DLPG) is G3 motif. GTP is bound by residues 176–180 (DLPGI) and 245–248 (TKPD). A G4 motif region spans residues 245-248 (TKPD). The interval 277–280 (KCRG) is G5 motif. The interval 339 to 364 (LLENQIKENYEKITEELQKYGSDVPE) is bundle signaling element (BSE). The tract at residues 364-531 (EEEHEKMFFL…HFQMEQIVYC (168 aa)) is middle domain. Residues 365-628 (EEHEKMFFLI…KDTHNWLLKE (264 aa)) are stalk. A critical for lipid-binding region spans residues 551-554 (KDRK). The 89-residue stretch at 570-658 (LSDIFEHLLA…ARRRLAKFPG (89 aa)) folds into the GED domain.

Belongs to the TRAFAC class dynamin-like GTPase superfamily. Dynamin/Fzo/YdjA family. In terms of assembly, homooligomer. Oligomerizes into multimeric filamentous or ring-like structures by virtue of its stalk domain. Oligomerization is critical for GTPase activity, protein stability, and recognition of viral target structures. Interacts with TRPC1, TRPC3, TRPC4, TRPC5, TRPC6 and TRPC7. Interacts with HSPA5. Interacts with TUBB/TUBB5. Interacts with DDX39A and DDX39B. In terms of processing, ISGylated.

It is found in the cytoplasm. It localises to the endoplasmic reticulum membrane. The protein resides in the perinuclear region. Its function is as follows. Interferon-induced dynamin-like GTPase with antiviral activity. This chain is Interferon-induced GTP-binding protein Mx1 (MX1), found in Eumetopias jubatus (Steller sea lion).